Here is a 299-residue protein sequence, read N- to C-terminus: Coenzyme PQQ synthesis protein B (299 aa).

Belongs to the PqqB family.

Its pathway is cofactor biosynthesis; pyrroloquinoline quinone biosynthesis. May be involved in the transport of PQQ or its precursor to the periplasm. In Xanthomonas euvesicatoria pv. vesicatoria (strain 85-10) (Xanthomonas campestris pv. vesicatoria), this protein is Coenzyme PQQ synthesis protein B.